Consider the following 210-residue polypeptide: MATETVELHKLKLAELKQECLARGLETKGIKQDLINRLQAYLEEHAEEEANEEDVLGDETEEEEPKPIELPVKEEEPPEKVVDMASEKKVVKITSGIPQTERMQKRAERFNVPVSLESKKAARAARFGISSVPTKGLSSDTKPMVNLDKLKERAQRFGLNVSSISRKSEDDEKLKKRKERFGIVTSSAGTGTTEDTEAKKRKRAERFGIA.

Ala2 bears the N-acetylalanine mark. An SAP domain is found at 8–42 (LHKLKLAELKQECLARGLETKGIKQDLINRLQAYL). Lys10 carries the N6-acetyllysine modification. The segment covering 45-64 (HAEEEANEEDVLGDETEEEE) has biased composition (acidic residues). Residues 45 to 87 (HAEEEANEEDVLGDETEEEEPKPIELPVKEEEPPEKVVDMASE) form a disordered region. A compositionally biased stretch (basic and acidic residues) spans 65–87 (PKPIELPVKEEEPPEKVVDMASE). N6-acetyllysine is present on Lys142. The disordered stretch occupies residues 161–210 (VSSISRKSEDDEKLKKRKERFGIVTSSAGTGTTEDTEAKKRKRAERFGIA). Ser163 carries the post-translational modification Phosphoserine. The span at 184-193 (VTSSAGTGTT) shows a compositional bias: polar residues.

The protein belongs to the SAP domain-containing ribonucleoprotein family. As to quaternary structure, interacts with DDX39A. Interacts with FUS. Interacts (via the C-terminal domain) with DDX39B; the interaction is direct and facilitates RNA binding of DDX39B. Component of the transcription/export (TREX) complex at least composed of ALYREF/THOC4, DDX39B, SARNP/CIP29, CHTOP and the THO subcomplex; TREX seems to have dynamic structure involving ATP-dependent remodeling; in the complex interacts directly with DDX39B in a ATP-dependent manner which bridges it to ALYREF/THOC4.

It localises to the nucleus. The protein resides in the nucleus speckle. Its function is as follows. Binds both single-stranded and double-stranded DNA with higher affinity for the single-stranded form. Specifically binds to scaffold/matrix attachment region DNA. Also binds single-stranded RNA. Enhances RNA unwinding activity of DDX39A. May participate in important transcriptional or translational control of cell growth, metabolism and carcinogenesis. Component of the TREX complex which is thought to couple mRNA transcription, processing and nuclear export, and specifically associates with spliced mRNA and not with unspliced pre-mRNA. The TREX complex is recruited to spliced mRNAs by a transcription-independent mechanism, binds to mRNA upstream of the exon-junction complex (EJC) and is recruited in a splicing- and cap-dependent manner to a region near the 5' end of the mRNA where it functions in mRNA export to the cytoplasm via the TAP/NXF1 pathway. Associates with DDX39B, which facilitates RNA binding of DDX39B and likely plays a role in mRNA export. The sequence is that of SAP domain-containing ribonucleoprotein (Sarnp) from Rattus norvegicus (Rat).